The following is a 349-amino-acid chain: Quinolinate synthase (349 aa).

Residues histidine 52 and serine 69 each coordinate iminosuccinate. Position 114 (cysteine 114) interacts with [4Fe-4S] cluster. Iminosuccinate contacts are provided by residues 140 to 142 (YVN) and serine 157. Cysteine 201 contributes to the [4Fe-4S] cluster binding site. Residues 227-229 (HPE) and threonine 255 each bind iminosuccinate. Position 300 (cysteine 300) interacts with [4Fe-4S] cluster.

This sequence belongs to the quinolinate synthase family. Type 2 subfamily. Requires [4Fe-4S] cluster as cofactor.

It is found in the cytoplasm. The catalysed reaction is iminosuccinate + dihydroxyacetone phosphate = quinolinate + phosphate + 2 H2O + H(+). Its pathway is cofactor biosynthesis; NAD(+) biosynthesis; quinolinate from iminoaspartate: step 1/1. Catalyzes the condensation of iminoaspartate with dihydroxyacetone phosphate to form quinolinate. This is Quinolinate synthase from Mycobacterium bovis (strain BCG / Tokyo 172 / ATCC 35737 / TMC 1019).